Reading from the N-terminus, the 456-residue chain is tRNA modification GTPase MnmE (456 aa).

(6S)-5-formyl-5,6,7,8-tetrahydrofolate is bound by residues Arg-21, Glu-85, and Lys-124. Positions 220–379 (QFRIVLYGEP…LLDAIKERTG (160 aa)) constitute a TrmE-type G domain. Residue Asn-230 coordinates K(+). Residues 230 to 235 (NTGKSS), 249 to 255 (SEIPGTT), and 274 to 277 (DTAG) each bind GTP. Residue Ser-234 participates in Mg(2+) binding. K(+) is bound by residues Ser-249, Ile-251, and Thr-254. Mg(2+) is bound at residue Thr-255. Residue Lys-456 coordinates (6S)-5-formyl-5,6,7,8-tetrahydrofolate.

This sequence belongs to the TRAFAC class TrmE-Era-EngA-EngB-Septin-like GTPase superfamily. TrmE GTPase family. In terms of assembly, homodimer. Heterotetramer of two MnmE and two MnmG subunits. Requires K(+) as cofactor.

It localises to the cytoplasm. Its function is as follows. Exhibits a very high intrinsic GTPase hydrolysis rate. Involved in the addition of a carboxymethylaminomethyl (cmnm) group at the wobble position (U34) of certain tRNAs, forming tRNA-cmnm(5)s(2)U34. In Leptospira interrogans serogroup Icterohaemorrhagiae serovar copenhageni (strain Fiocruz L1-130), this protein is tRNA modification GTPase MnmE.